The primary structure comprises 369 residues: UPF0284 protein cce_1085 (369 aa).

Belongs to the UPF0284 family.

This is UPF0284 protein cce_1085 from Crocosphaera subtropica (strain ATCC 51142 / BH68) (Cyanothece sp. (strain ATCC 51142)).